Reading from the N-terminus, the 317-residue chain is Probable pathogenesis-related protein CaO19.6200 (317 aa).

An N-terminal signal peptide occupies residues 1 to 23 (MKFLQSFPVILAVFSFAANLVSS). Disordered stretches follow at residues 52–116 (RLET…TTVT) and 155–179 (PSAPKPQPQPQPQENNSGTNDDSQL). A compositionally biased stretch (low complexity) spans 58 to 76 (PTSTTTTIVIPSSKPSSPE). Composition is skewed to polar residues over residues 84–116 (QPMFQSPSPVQITPSTTSINNAPSPTKPETTVT) and 168–179 (ENNSGTNDDSQL). Residue Asn-169 is glycosylated (N-linked (GlcNAc...) asparagine). Residues 187–297 (LEAHNIKRAS…GWGLYIICNY (111 aa)) form the SCP domain.

This sequence belongs to the CRISP family.

The protein resides in the secreted. Its function is as follows. Secreted protein that acts as a virulence factor during infections. The protein is Probable pathogenesis-related protein CaO19.6200 of Candida albicans (strain SC5314 / ATCC MYA-2876) (Yeast).